The chain runs to 37 residues: Large ribosomal subunit protein bL36 (37 aa).

This sequence belongs to the bacterial ribosomal protein bL36 family.

In Magnetococcus marinus (strain ATCC BAA-1437 / JCM 17883 / MC-1), this protein is Large ribosomal subunit protein bL36.